The primary structure comprises 137 residues: DNA-directed RNA polymerase I subunit RPA14 (137 aa).

The segment at 100–137 is disordered; that stretch reads PPAQDFSAAPIQVSTTEKKETSIGVSATGGKKTTFADE. Ser-121 bears the Phosphoserine mark.

Component of the RNA polymerase I (Pol I) complex consisting of 14 subunits: RPA135, RPA190, RPC40, RPA14, RPB5, RPO26, RPA43, RPB8, RPA12, RPB10, RPC19, RPC10, RPA49 and RPA34. The complex is composed of a horseshoe-shaped core containing ten subunits (RPA135, RPA190, RPB5, RPO26, RPB8, RPB10, RPC10, RPA12, RPC19 and RPC40) where RPA135 and RPA190 form the DNA-binding cleft. Outside of the core, RPA14 and RPA43 form the stalk that mediates interactions with transcription initiation factors and newly synthesized RNA. The N-terminus is blocked.

The protein localises to the nucleus. It localises to the nucleolus. Its function is as follows. DNA-dependent RNA polymerases catalyze the transcription of DNA into RNA using the four ribonucleoside triphosphates as substrates. Component of RNA polymerase I (Pol I) which synthesizes ribosomal RNA precursors. RPA14 seems to play a role in the stability of subunits RPO26 and RPA43. In vitro, the RPA14-RPA43 subcomplex binds single-stranded RNA. This is DNA-directed RNA polymerase I subunit RPA14 (RPA14) from Saccharomyces cerevisiae (strain ATCC 204508 / S288c) (Baker's yeast).